We begin with the raw amino-acid sequence, 620 residues long: Chaperone protein HscA homolog (620 aa).

Belongs to the heat shock protein 70 family.

Chaperone involved in the maturation of iron-sulfur cluster-containing proteins. Has a low intrinsic ATPase activity which is markedly stimulated by HscB. This is Chaperone protein HscA homolog from Pseudomonas savastanoi pv. phaseolicola (strain 1448A / Race 6) (Pseudomonas syringae pv. phaseolicola (strain 1448A / Race 6)).